Here is a 310-residue protein sequence, read N- to C-terminus: Aspartate carbamoyltransferase catalytic subunit (310 aa).

The carbamoyl phosphate site is built by Arg-54 and Thr-55. Lys-84 is an L-aspartate binding site. Carbamoyl phosphate is bound by residues Arg-105, His-134, and Gln-137. L-aspartate-binding residues include Arg-167 and Arg-229. Leu-267 and Pro-268 together coordinate carbamoyl phosphate.

It belongs to the aspartate/ornithine carbamoyltransferase superfamily. ATCase family. Heterododecamer (2C3:3R2) of six catalytic PyrB chains organized as two trimers (C3), and six regulatory PyrI chains organized as three dimers (R2).

The catalysed reaction is carbamoyl phosphate + L-aspartate = N-carbamoyl-L-aspartate + phosphate + H(+). The protein operates within pyrimidine metabolism; UMP biosynthesis via de novo pathway; (S)-dihydroorotate from bicarbonate: step 2/3. In terms of biological role, catalyzes the condensation of carbamoyl phosphate and aspartate to form carbamoyl aspartate and inorganic phosphate, the committed step in the de novo pyrimidine nucleotide biosynthesis pathway. This is Aspartate carbamoyltransferase catalytic subunit from Enterobacter sp. (strain 638).